A 206-amino-acid chain; its full sequence is 2,3-bisphosphoglycerate-dependent phosphoglycerate mutase (206 aa).

Substrate contacts are provided by residues 9–16, 22–23, arginine 61, 88–91, lysine 99, 115–116, and 159–160; these read RHGQSEWN, TG, ERDY, RR, and GN. Histidine 10 acts as the Tele-phosphohistidine intermediate in catalysis. The Proton donor/acceptor role is filled by glutamate 88.

This sequence belongs to the phosphoglycerate mutase family. BPG-dependent PGAM subfamily. Homodimer.

The catalysed reaction is (2R)-2-phosphoglycerate = (2R)-3-phosphoglycerate. It functions in the pathway carbohydrate degradation; glycolysis; pyruvate from D-glyceraldehyde 3-phosphate: step 3/5. Functionally, catalyzes the interconversion of 2-phosphoglycerate and 3-phosphoglycerate. The sequence is that of 2,3-bisphosphoglycerate-dependent phosphoglycerate mutase from Methylocella silvestris (strain DSM 15510 / CIP 108128 / LMG 27833 / NCIMB 13906 / BL2).